Consider the following 447-residue polypeptide: Na(+)-translocating NADH-quinone reductase subunit A (447 aa).

The protein belongs to the NqrA family. As to quaternary structure, composed of six subunits; NqrA, NqrB, NqrC, NqrD, NqrE and NqrF.

It carries out the reaction a ubiquinone + n Na(+)(in) + NADH + H(+) = a ubiquinol + n Na(+)(out) + NAD(+). In terms of biological role, NQR complex catalyzes the reduction of ubiquinone-1 to ubiquinol by two successive reactions, coupled with the transport of Na(+) ions from the cytoplasm to the periplasm. NqrA to NqrE are probably involved in the second step, the conversion of ubisemiquinone to ubiquinol. The sequence is that of Na(+)-translocating NADH-quinone reductase subunit A from Haemophilus influenzae (strain 86-028NP).